The primary structure comprises 196 residues: Ribonuclease HII (196 aa).

Positions 9 to 196 constitute an RNase H type-2 domain; it reads KLVAGVDEVG…KPVRHALGIE (188 aa). A divalent metal cation contacts are provided by Asp15, Glu16, and Asp107.

This sequence belongs to the RNase HII family. It depends on Mn(2+) as a cofactor. Mg(2+) is required as a cofactor.

It is found in the cytoplasm. It carries out the reaction Endonucleolytic cleavage to 5'-phosphomonoester.. Endonuclease that specifically degrades the RNA of RNA-DNA hybrids. This chain is Ribonuclease HII, found in Aeromonas salmonicida (strain A449).